The sequence spans 201 residues: Holliday junction branch migration complex subunit RuvA (201 aa).

Residues 1–63 (MYDYIKGIVK…EDNISLFGFQ (63 aa)) are domain I. The domain II stretch occupies residues 64–142 (STEERYLFKK…DVVASEIVYK (79 aa)). Positions 143 to 153 (AAENDIVTGLS) are flexible linker. Residues 153-201 (SPQLEEAVLALEALGYSTRELKKVIPKMAKENDLTSDAYIKLALRLMTK) are domain III.

Belongs to the RuvA family. As to quaternary structure, homotetramer. Forms an RuvA(8)-RuvB(12)-Holliday junction (HJ) complex. HJ DNA is sandwiched between 2 RuvA tetramers; dsDNA enters through RuvA and exits via RuvB. An RuvB hexamer assembles on each DNA strand where it exits the tetramer. Each RuvB hexamer is contacted by two RuvA subunits (via domain III) on 2 adjacent RuvB subunits; this complex drives branch migration. In the full resolvosome a probable DNA-RuvA(4)-RuvB(12)-RuvC(2) complex forms which resolves the HJ.

It is found in the cytoplasm. In terms of biological role, the RuvA-RuvB-RuvC complex processes Holliday junction (HJ) DNA during genetic recombination and DNA repair, while the RuvA-RuvB complex plays an important role in the rescue of blocked DNA replication forks via replication fork reversal (RFR). RuvA specifically binds to HJ cruciform DNA, conferring on it an open structure. The RuvB hexamer acts as an ATP-dependent pump, pulling dsDNA into and through the RuvAB complex. HJ branch migration allows RuvC to scan DNA until it finds its consensus sequence, where it cleaves and resolves the cruciform DNA. This chain is Holliday junction branch migration complex subunit RuvA, found in Listeria innocua serovar 6a (strain ATCC BAA-680 / CLIP 11262).